The primary structure comprises 98 residues: MHGRHVTLKDIVLDLQPPDPVGLHCYEQLVDSSEDEVDEVDGQDSQPLKQHFQIVTCCCGCDSNVRLVVQCTETDIREVQQLLLGTLNIVCPICAPKT.

The segment at 1-42 (MHGRHVTLKDIVLDLQPPDPVGLHCYEQLVDSSEDEVDEVDG) is E7 terminal domain. Positions 23–27 (LHCYE) match the LXCXE motif; interaction with host RB1 and TMEM173/STING motif. A zinc finger lies at 58-94 (CCGCDSNVRLVVQCTETDIREVQQLLLGTLNIVCPIC). Residues 76-84 (IREVQQLLL) carry the Nuclear export signal motif.

The protein belongs to the papillomaviridae E7 protein family. In terms of assembly, homodimer. Homooligomer. Interacts with host RB1; this interaction induces dissociation of RB1-E2F1 complex thereby disrupting RB1 activity. Interacts with host EP300; this interaction represses EP300 transcriptional activity. Interacts with protein E2; this interaction inhibits E7 oncogenic activity. Interacts with host TMEM173/STING; this interaction impairs the ability of TMEM173/STING to sense cytosolic DNA and promote the production of type I interferon (IFN-alpha and IFN-beta). Highly phosphorylated.

The protein resides in the host cytoplasm. Its subcellular location is the host nucleus. Its function is as follows. Plays a role in viral genome replication by driving entry of quiescent cells into the cell cycle. Stimulation of progression from G1 to S phase allows the virus to efficiently use the cellular DNA replicating machinery to achieve viral genome replication. E7 protein has both transforming and trans-activating activities. Induces the disassembly of the E2F1 transcription factor from RB1, with subsequent transcriptional activation of E2F1-regulated S-phase genes. Interferes with host histone deacetylation mediated by HDAC1 and HDAC2, leading to transcription activation. Also plays a role in the inhibition of both antiviral and antiproliferative functions of host interferon alpha. Interaction with host TMEM173/STING impairs the ability of TMEM173/STING to sense cytosolic DNA and promote the production of type I interferon (IFN-alpha and IFN-beta). This Human papillomavirus type 6b protein is Protein E7.